Reading from the N-terminus, the 91-residue chain is Probable Fe(2+)-trafficking protein (91 aa).

Belongs to the Fe(2+)-trafficking protein family.

In terms of biological role, could be a mediator in iron transactions between iron acquisition and iron-requiring processes, such as synthesis and/or repair of Fe-S clusters in biosynthetic enzymes. This Acidobacterium capsulatum (strain ATCC 51196 / DSM 11244 / BCRC 80197 / JCM 7670 / NBRC 15755 / NCIMB 13165 / 161) protein is Probable Fe(2+)-trafficking protein.